Consider the following 555-residue polypeptide: Dihydroxy-acid dehydratase (555 aa).

Residue Asp-78 coordinates Mg(2+). Residue Cys-119 coordinates [2Fe-2S] cluster. Mg(2+) contacts are provided by Asp-120 and Lys-121. Lys-121 carries the N6-carboxylysine modification. Cys-191 serves as a coordination point for [2Fe-2S] cluster. Glu-444 provides a ligand contact to Mg(2+). The active-site Proton acceptor is the Ser-470.

Belongs to the IlvD/Edd family. In terms of assembly, homodimer. [2Fe-2S] cluster serves as cofactor. Requires Mg(2+) as cofactor.

It catalyses the reaction (2R)-2,3-dihydroxy-3-methylbutanoate = 3-methyl-2-oxobutanoate + H2O. It carries out the reaction (2R,3R)-2,3-dihydroxy-3-methylpentanoate = (S)-3-methyl-2-oxopentanoate + H2O. It functions in the pathway amino-acid biosynthesis; L-isoleucine biosynthesis; L-isoleucine from 2-oxobutanoate: step 3/4. It participates in amino-acid biosynthesis; L-valine biosynthesis; L-valine from pyruvate: step 3/4. In terms of biological role, functions in the biosynthesis of branched-chain amino acids. Catalyzes the dehydration of (2R,3R)-2,3-dihydroxy-3-methylpentanoate (2,3-dihydroxy-3-methylvalerate) into 2-oxo-3-methylpentanoate (2-oxo-3-methylvalerate) and of (2R)-2,3-dihydroxy-3-methylbutanoate (2,3-dihydroxyisovalerate) into 2-oxo-3-methylbutanoate (2-oxoisovalerate), the penultimate precursor to L-isoleucine and L-valine, respectively. This Maridesulfovibrio salexigens (strain ATCC 14822 / DSM 2638 / NCIMB 8403 / VKM B-1763) (Desulfovibrio salexigens) protein is Dihydroxy-acid dehydratase.